Here is a 121-residue protein sequence, read N- to C-terminus: Large ribosomal subunit protein bL19 (121 aa).

The protein belongs to the bacterial ribosomal protein bL19 family.

Functionally, this protein is located at the 30S-50S ribosomal subunit interface and may play a role in the structure and function of the aminoacyl-tRNA binding site. This Chlorobium phaeovibrioides (strain DSM 265 / 1930) (Prosthecochloris vibrioformis (strain DSM 265)) protein is Large ribosomal subunit protein bL19.